A 194-amino-acid polypeptide reads, in one-letter code: Putative 3-methyladenine DNA glycosylase (194 aa).

It belongs to the DNA glycosylase MPG family.

In Chlamydia felis (strain Fe/C-56) (Chlamydophila felis), this protein is Putative 3-methyladenine DNA glycosylase.